The chain runs to 399 residues: Chalcone synthase 2 (399 aa).

The active site involves Cys-166.

It belongs to the thiolase-like superfamily. Chalcone/stilbene synthases family.

It catalyses the reaction (E)-4-coumaroyl-CoA + 3 malonyl-CoA + 3 H(+) = 2',4,4',6'-tetrahydroxychalcone + 3 CO2 + 4 CoA. Its pathway is secondary metabolite biosynthesis; flavonoid biosynthesis. The primary product of this enzyme is 4,2',4',6'-tetrahydroxychalcone (also termed naringenin-chalcone or chalcone) which can under specific conditions spontaneously isomerize into naringenin. Substrate preference is feruloyl-CoA = caffeoyl-CoA &gt;&gt; cinnamoyl-CoA. The polypeptide is Chalcone synthase 2 (CHS2) (Hordeum vulgare (Barley)).